The sequence spans 266 residues: Signal peptidase I (266 aa).

The Cytoplasmic segment spans residues 1 to 20 (MQTDNTKSNTNKTAKQEWGS). A helical transmembrane segment spans residues 21–41 (FVFVICIALLIRILIMEPFTV). At 42-266 (PTGSMKATIL…IFRNLYNTDV (225 aa)) the chain is on the periplasmic side. Active-site residues include serine 45 and lysine 108.

Belongs to the peptidase S26 family.

Its subcellular location is the cell inner membrane. The enzyme catalyses Cleavage of hydrophobic, N-terminal signal or leader sequences from secreted and periplasmic proteins.. The sequence is that of Signal peptidase I (lepB) from Rickettsia massiliae (strain Mtu5).